Here is a 633-residue protein sequence, read N- to C-terminus: Electron transfer flavoprotein-ubiquinone oxidoreductase, mitochondrial (633 aa).

The transit peptide at M1 to S90 directs the protein to the mitochondrion. V102–I116 provides a ligand contact to FAD. Residues V140 to H161 lie within the membrane without spanning it. Positions 334 and 335 each coordinate a ubiquinone. Residues I401–V421 lie within the membrane without spanning it. Residues C578, C602, C605, and C608 each contribute to the [4Fe-4S] cluster site. The 30-residue stretch at P593 to P622 folds into the 4Fe-4S ferredoxin-type domain.

The protein belongs to the ETF-QO/FixC family. [4Fe-4S] cluster is required as a cofactor. It depends on FAD as a cofactor.

It is found in the mitochondrion inner membrane. It carries out the reaction a ubiquinone + reduced [electron-transfer flavoprotein] = a ubiquinol + oxidized [electron-transfer flavoprotein] + H(+). With respect to regulation, up-regulated by KIN10, by S1-bZIP specific dimers, and also by C/S1 bZIP heterodimers. In terms of biological role, accepts electrons from ETF and reduces ubiquinone. May act downstream of IVD and D2HGDH in the degradation of phytol or chlorophyll during dark-induced senescence and sugar starvation. This is Electron transfer flavoprotein-ubiquinone oxidoreductase, mitochondrial (ETFQO) from Arabidopsis thaliana (Mouse-ear cress).